Consider the following 289-residue polypeptide: ATP synthase gamma chain (289 aa).

Belongs to the ATPase gamma chain family. As to quaternary structure, F-type ATPases have 2 components, CF(1) - the catalytic core - and CF(0) - the membrane proton channel. CF(1) has five subunits: alpha(3), beta(3), gamma(1), delta(1), epsilon(1). CF(0) has three main subunits: a, b and c.

The protein resides in the cell inner membrane. Produces ATP from ADP in the presence of a proton gradient across the membrane. The gamma chain is believed to be important in regulating ATPase activity and the flow of protons through the CF(0) complex. The chain is ATP synthase gamma chain from Coxiella burnetii (strain CbuG_Q212) (Coxiella burnetii (strain Q212)).